Reading from the N-terminus, the 276-residue chain is uncharacterized protein (276 aa).

The N-terminal stretch at 1-29 is a signal peptide; it reads MKSHVRSFKTYIRDEIIKKGGWVNAHAHA.

It belongs to the metallo-dependent hydrolases superfamily.

This is an uncharacterized protein from Haemophilus influenzae (strain ATCC 51907 / DSM 11121 / KW20 / Rd).